The sequence spans 327 residues: Phenylalanine--tRNA ligase alpha subunit (327 aa).

Glu-252 is a Mg(2+) binding site.

This sequence belongs to the class-II aminoacyl-tRNA synthetase family. Phe-tRNA synthetase alpha subunit type 1 subfamily. In terms of assembly, tetramer of two alpha and two beta subunits. Mg(2+) is required as a cofactor.

Its subcellular location is the cytoplasm. The enzyme catalyses tRNA(Phe) + L-phenylalanine + ATP = L-phenylalanyl-tRNA(Phe) + AMP + diphosphate + H(+). The sequence is that of Phenylalanine--tRNA ligase alpha subunit from Klebsiella pneumoniae (strain 342).